Here is a 493-residue protein sequence, read N- to C-terminus: MSEELNEHMQVRRDKLAEHMEKGLDPFGGKFERSHQATDLIEKYDSYSKEELEETTDEVTIAGRLMTKRGKGKAGFAHIQDLSGQIQLYVRKDMIGDDAYEVFKSADLGDIVGVTGVMFKTNVGEISVKAKQFQLLTKSLRPLPEKYHGLKDIEQRYRQRYLDLITNPDSRGTFVSRSKIIQSMREYLNGQGFLEVETPMMHSIPGGASARPFITHHNALDIELYMRIAIELHLKRLMVGGLEKVYEIGRVFRNEGVSTRHNPEFTMIELYEAYADYHDIMELTENLVAHIAKQVHGSTTITYGEHEINLEPKWTRLHIVDAVKDATGVDFWKEVSDEEARALAKEHGVQVTESMSYGHVVNEFFEQKVEETLIQPTFIHGHPVEISPLAKKNKEDERFTDRFELFIVGREHANAFSELNDPIDQRARFEAQVKERAEGNDEAHYMDEDFLEALEYGMPPTGGLGIGVDRLVMLLTNSPSIRDVLLFPQMRTK.

Glu-404 and Glu-411 together coordinate Mg(2+).

Belongs to the class-II aminoacyl-tRNA synthetase family. In terms of assembly, homodimer. Mg(2+) is required as a cofactor.

The protein localises to the cytoplasm. The catalysed reaction is tRNA(Lys) + L-lysine + ATP = L-lysyl-tRNA(Lys) + AMP + diphosphate. The protein is Lysine--tRNA ligase of Oceanobacillus iheyensis (strain DSM 14371 / CIP 107618 / JCM 11309 / KCTC 3954 / HTE831).